The following is a 293-amino-acid chain: Small ribosomal subunit protein uS5 (293 aa).

The segment at Met1–Glu56 is disordered. Ala2 carries the post-translational modification N-acetylalanine. Over residues Ala7–Arg34 the composition is skewed to gly residues. A compositionally biased stretch (basic residues) spans Gly35–Arg51. Glycyl lysine isopeptide (Lys-Gly) (interchain with G-Cter in ubiquitin) cross-links involve residues Lys54 and Lys58. Residues Leu102 to Val165 enclose the S5 DRBM domain. Thr252 is modified (phosphothreonine). Lys263 is modified (N6-acetyllysine). Residue Ser264 is modified to Phosphoserine. Thr270 is modified (phosphothreonine). The residue at position 275 (Lys275) is an N6-acetyllysine; alternate. A Glycyl lysine isopeptide (Lys-Gly) (interchain with G-Cter in SUMO1); alternate cross-link involves residue Lys275. A Glycyl lysine isopeptide (Lys-Gly) (interchain with G-Cter in SUMO2); alternate cross-link involves residue Lys275. A Glycyl lysine isopeptide (Lys-Gly) (interchain with G-Cter in ubiquitin); alternate cross-link involves residue Lys275. Ser281 is subject to Phosphoserine.

Belongs to the universal ribosomal protein uS5 family. Component of the small ribosomal subunit. Interacts with zinc finger protein ZNF277 (via zinc-finger domains); the interaction is direct; the interaction is extra-ribosomal. Interaction with ZNF277 competes with the binding of RPS2 to protein arginine methyltransferase PRMT3. Citrullinated by PADI4 in the Arg/Gly-rich region. In terms of processing, asymmetric arginine dimethylation by PRMT3 occurs at multiple sites in the Arg/Gly-rich region. Post-translationally, monoubiquitinated at Lys-54 and Lys-58 by RNF10 when a ribosome has stalled during translation, leading to its degradation by the proteasome. Deubiquitinated at Lys-54 and Lys-58 by USP10, preventing degradation by the proteasome and promoting 40S ribosome subunit recycling following ribosome dissociation.

The protein localises to the cytoplasm. The protein resides in the nucleus. It localises to the nucleolus. Component of the ribosome, a large ribonucleoprotein complex responsible for the synthesis of proteins in the cell. The small ribosomal subunit (SSU) binds messenger RNAs (mRNAs) and translates the encoded message by selecting cognate aminoacyl-transfer RNA (tRNA) molecules. The large subunit (LSU) contains the ribosomal catalytic site termed the peptidyl transferase center (PTC), which catalyzes the formation of peptide bonds, thereby polymerizing the amino acids delivered by tRNAs into a polypeptide chain. The nascent polypeptides leave the ribosome through a tunnel in the LSU and interact with protein factors that function in enzymatic processing, targeting, and the membrane insertion of nascent chains at the exit of the ribosomal tunnel. Plays a role in the assembly and function of the 40S ribosomal subunit. Mutations in this protein affects the control of translational fidelity. Involved in nucleolar processing of pre-18S ribosomal RNA and ribosome assembly. The polypeptide is Small ribosomal subunit protein uS5 (RPS2) (Homo sapiens (Human)).